A 150-amino-acid polypeptide reads, in one-letter code: Small ribosomal subunit protein uS15 (150 aa).

Residues Met-1–Gln-22 form a disordered region.

This sequence belongs to the universal ribosomal protein uS15 family. Part of the 30S ribosomal subunit.

The protein is Small ribosomal subunit protein uS15 of Aeropyrum pernix (strain ATCC 700893 / DSM 11879 / JCM 9820 / NBRC 100138 / K1).